A 1238-amino-acid chain; its full sequence is MSILERLWDLLGLVFGSTFERVGSLATSVFGSANARQVAKLQESADRITAMEPKFAAMSDEELRDQTVLFRKRLREGETLDDIMEEAFAVCREGGKRFLGMRHYDVQLIGGMVLHSGAIGEMVTGEGKTLVATLPAYLNALEAKGVHVITVNDYLARRDMEWMAPLYMNLGLTVDAIQSGMSTSEKQAAYQCDITYGTNNEFGFDYLRDNMRPAAKGDDRFPSEVQQCQGPLNYAIIDEVDNILIDEARTPLIISGPADLDLGRYGEADRVARQLKKEEHFTVDEKQHNVTLTDEGVRAAEELAGVESFYTAGNMEWPHLIDNALKAHYLYKLDVNYVVKDKQVVIVDEFTGRLMDGRQWSDGLHQAVEAKEGVPIKQETQTFATASLQNIFKMYKKLSGMTGTAMTEADEFWKIYKLDVVAIPTHRGLQRIEHPDLIYLTEKDKFKAIADDVERTHKWDVVVLKDGTEIWGNIKSETDSVVELLPKGEKQTESFSHEKIVAIERAGRPVLVGTVSIEKSERLSALLERRGIKHDVLNAKQHGREADIVSQAGRIGAVTIATNMAGRGTDIILGGNPETLAWSQLQHKYPTRLEVPDAEWKALVDEIDERENMSAEGKIVREIGGLYVLGTERHESRRIDLQLRGRCGRQGDPGGSRFFLSLEDDLMRIFAGDFVKSMMERMGMKEGEAIESSLVTRRIAAAQKKVEERNFEIRKSLLEYDEVMDEQRKRVYRYRQNLLDGHSSREMLLTLIHNEIQSQVETFLDPNYGVDTFSTFAGGKLGCQLDARDFQNMDFEMADTYAKDQAERASEVTVAEAVEENLPESMEDEWNWKAMATWANTHLGTNYQDHQLKNKDREEMIDELIAHAHKQIEETDLSEGEPLLEADYGLRVLCAWMRHKFGIETTPEEFRDVEDRRKVTEELNRRAEAAYTEKEAEYPVLTGISRFTDKQGAQVSLDREGLVDWVHGRFNHELSVDEVKLNRDDLKVQLIQYSKQTASASGGMHAQAAEKVEDLFGRADADVTASLASGQSGKLEALATWLQEELGNRNTAEDLSRMNRAELTLAVNGAVDDKFHPEMRRMERQILLNIVDDSWKNHLLTMDHLRSSVGLKGYAQMDPKVEYKREGMRLFESMWDSIGERVTDLIFRMESFNDDFIRSTWVDARTRHDDAHEAGRSAQQAAQMESNTAAQRAAAGSEGRAEGSVDTVRVEEPRIGRNAPCPCGSGKKYKSCCMRRDG.

ATP is bound by residues Gln-107, 125 to 129 (GEGKT), and Asp-570. The disordered stretch occupies residues 1194–1220 (AAGSEGRAEGSVDTVRVEEPRIGRNAP). Positions 1199–1215 (GRAEGSVDTVRVEEPRI) are enriched in basic and acidic residues. Positions 1221, 1223, 1232, and 1233 each coordinate Zn(2+).

This sequence belongs to the SecA family. In terms of assembly, monomer and homodimer. Part of the essential Sec protein translocation apparatus which comprises SecA, SecYEG and auxiliary proteins SecDF. Other proteins may also be involved. It depends on Zn(2+) as a cofactor.

It localises to the cell inner membrane. It is found in the cytoplasm. It catalyses the reaction ATP + H2O + cellular proteinSide 1 = ADP + phosphate + cellular proteinSide 2.. Part of the Sec protein translocase complex. Interacts with the SecYEG preprotein conducting channel. Has a central role in coupling the hydrolysis of ATP to the transfer of proteins into and across the cell membrane, serving as an ATP-driven molecular motor driving the stepwise translocation of polypeptide chains across the membrane. The sequence is that of Protein translocase subunit SecA 1 from Rhodopirellula baltica (strain DSM 10527 / NCIMB 13988 / SH1).